We begin with the raw amino-acid sequence, 465 residues long: Argininosuccinate lyase (465 aa).

This sequence belongs to the lyase 1 family. Argininosuccinate lyase subfamily.

It is found in the cytoplasm. The enzyme catalyses 2-(N(omega)-L-arginino)succinate = fumarate + L-arginine. The protein operates within amino-acid biosynthesis; L-arginine biosynthesis; L-arginine from L-ornithine and carbamoyl phosphate: step 3/3. The protein is Argininosuccinate lyase of Deinococcus deserti (strain DSM 17065 / CIP 109153 / LMG 22923 / VCD115).